We begin with the raw amino-acid sequence, 242 residues long: 3-deoxy-manno-octulosonate cytidylyltransferase (242 aa).

This sequence belongs to the KdsB family.

The protein resides in the cytoplasm. It catalyses the reaction 3-deoxy-alpha-D-manno-oct-2-ulosonate + CTP = CMP-3-deoxy-beta-D-manno-octulosonate + diphosphate. It participates in nucleotide-sugar biosynthesis; CMP-3-deoxy-D-manno-octulosonate biosynthesis; CMP-3-deoxy-D-manno-octulosonate from 3-deoxy-D-manno-octulosonate and CTP: step 1/1. The protein operates within bacterial outer membrane biogenesis; lipopolysaccharide biosynthesis. Its function is as follows. Activates KDO (a required 8-carbon sugar) for incorporation into bacterial lipopolysaccharide in Gram-negative bacteria. The sequence is that of 3-deoxy-manno-octulosonate cytidylyltransferase from Mesorhizobium japonicum (strain LMG 29417 / CECT 9101 / MAFF 303099) (Mesorhizobium loti (strain MAFF 303099)).